A 415-amino-acid chain; its full sequence is Gamma-glutamyl phosphate reductase (415 aa).

This sequence belongs to the gamma-glutamyl phosphate reductase family.

It is found in the cytoplasm. The enzyme catalyses L-glutamate 5-semialdehyde + phosphate + NADP(+) = L-glutamyl 5-phosphate + NADPH + H(+). The protein operates within amino-acid biosynthesis; L-proline biosynthesis; L-glutamate 5-semialdehyde from L-glutamate: step 2/2. Catalyzes the NADPH-dependent reduction of L-glutamate 5-phosphate into L-glutamate 5-semialdehyde and phosphate. The product spontaneously undergoes cyclization to form 1-pyrroline-5-carboxylate. The protein is Gamma-glutamyl phosphate reductase of Bacillus subtilis (strain 168).